A 279-amino-acid chain; its full sequence is MHPDAQLKTALKNGFDPKLLYKEPLTTVKEPVCSILEKHSKVPVDKVVSHVNEVRDRAFAVFPYACIGQFSFVELSIADSPCYREMLERTKQGHKLLDLGCAFGQELRQLIYDGTPPTNLYGSDIQQDFLNLGYELFLDRAILPDSQLIAADVLDKQSALFERLAGELNIVYISLFLHVFDFEKQITVAQNVLDLLKAEPGSMIVCRVTACRDQEVLAATQERMPYYYHDLASWNRLWEEVKKQTGVKLSVESWEQPDELVKKHPLPGIYILGSSIRRL.

Residues 124–125 (DI) and 152–153 (DV) each bind S-adenosyl-L-methionine.

Belongs to the class I-like SAM-binding methyltransferase superfamily. As to quaternary structure, homodimer.

It participates in secondary metabolite biosynthesis; terpenoid biosynthesis. In terms of biological role, methyltransferase; part of the gene cluster A that mediates the biosynthesis of the fungal meroterpenoid acetoxydehydroaustin. The first step of the pathway is the synthesis of 3,5-dimethylorsellinic acid by the polyketide synthase ausA. 3,5-dimethylorsellinic acid is then prenylated by the polyprenyl transferase ausN. Further epoxidation by the FAD-dependent monooxygenase ausM and cyclization by the probable terpene cyclase ausL lead to the formation of protoaustinoid A. Protoaustinoid A is then oxidized to spiro-lactone preaustinoid A3 by the combined action of the FAD-binding monooxygenases ausB and ausC, and the dioxygenase ausE. Acid-catalyzed keto-rearrangement and ring contraction of the tetraketide portion of preaustinoid A3 by ausJ lead to the formation of preaustinoid A4. The aldo-keto reductase ausK, with the help of ausH, is involved in the next step by transforming preaustinoid A4 into isoaustinone which is in turn hydroxylated by the P450 monooxygenase ausI to form austinolide. The cytochrome P450 monooxygenase ausG then modifies austinolide to austinol. Austinol is further acetylated to austin by the O-acetyltransferase ausP, which spontaneously changes to dehydroaustin. The cytochrome P450 monooxygenase then converts dehydroaustin is into 7-dehydrodehydroaustin. The hydroxylation catalyzed by ausR permits the second O-acetyltransferase ausQ to add an additional acetyl group to the molecule, leading to the formation of acetoxydehydroaustin. Due to genetic rearrangements of the clusters and the subsequent loss of some enzymes, the end product of the Penicillium brasilianum austinoid biosynthesis clusters is acetoxydehydroaustin. This is Methyltransferase ausD from Penicillium brasilianum.